A 248-amino-acid chain; its full sequence is tRNA (guanine-N(1)-)-methyltransferase (248 aa).

Residues glycine 113 and 133–138 contribute to the S-adenosyl-L-methionine site; that span reads IGDYVL. A disordered region spans residues 227–248; sequence RPAQTIRAKGESQKTPKNKTDG. Residues 234–248 show a composition bias toward basic and acidic residues; sequence AKGESQKTPKNKTDG.

It belongs to the RNA methyltransferase TrmD family. In terms of assembly, homodimer.

The protein localises to the cytoplasm. The enzyme catalyses guanosine(37) in tRNA + S-adenosyl-L-methionine = N(1)-methylguanosine(37) in tRNA + S-adenosyl-L-homocysteine + H(+). Its function is as follows. Specifically methylates guanosine-37 in various tRNAs. This Rhodopseudomonas palustris (strain TIE-1) protein is tRNA (guanine-N(1)-)-methyltransferase.